Here is a 674-residue protein sequence, read N- to C-terminus: Kinesin-like protein KIFC1 (674 aa).

Residues Ser28, Ser33, and Ser35 each carry the phosphoserine modification. The interval Thr66 to Arg96 is disordered. Polar residues predominate over residues Ser75–Thr84. Residues Asp146 to Phe315 adopt a coiled-coil conformation. Positions Asn311–Cys664 constitute a Kinesin motor domain. The disordered stretch occupies residues Thr327–Ala366. Residues Pro336–Pro345 show a composition bias toward pro residues. Thr360 bears the Phosphothreonine mark. Residue Gly411–Thr418 participates in ATP binding.

The protein belongs to the TRAFAC class myosin-kinesin ATPase superfamily. Kinesin family. NCD subfamily. As to quaternary structure, binds NUBP1 and NUBP2. Interacts with PPP1R42. Highly expressed in 14 dpc embryos, spleen and NIH3T3 cells. Also expressed in testis, brain, lung, kidney and cultured astrocytes. Very low levels in skeletal muscle and heart.

Its subcellular location is the nucleus. It localises to the cytoplasm. The protein resides in the cytoskeleton. It is found in the microtubule organizing center. The protein localises to the centrosome. Its subcellular location is the spindle. It localises to the early endosome. In terms of biological role, minus end-directed microtubule-dependent motor required for bipolar spindle formation. May contribute to movement of early endocytic vesicles. Regulates cilium formation and structure. The protein is Kinesin-like protein KIFC1 of Mus musculus (Mouse).